Here is a 92-residue protein sequence, read N- to C-terminus: uncharacterized protein (92 aa).

The 66-residue stretch at 24–89 folds into the HMA domain; the sequence is KQIVLKVKEM…AIHKLKYTAE (66 aa). Cys-35 and Cys-38 together coordinate a metal cation.

This is an uncharacterized protein from Haemophilus influenzae (strain ATCC 51907 / DSM 11121 / KW20 / Rd).